The chain runs to 80 residues: UPF0291 protein LCA_1274 (80 aa).

The interval 59-80 is disordered; it reads EGKEVTPEKVKDIQREKGLRDD.

The protein belongs to the UPF0291 family.

The protein localises to the cytoplasm. This is UPF0291 protein LCA_1274 from Latilactobacillus sakei subsp. sakei (strain 23K) (Lactobacillus sakei subsp. sakei).